Reading from the N-terminus, the 404-residue chain is uncharacterized protein (404 aa).

8 helical membrane-spanning segments follow: residues 1 to 21, 32 to 52, 89 to 109, 182 to 202, 261 to 281, 285 to 305, 344 to 364, and 384 to 404; these read MNVLWGLLGAVAIIAIAFLFS, VIVGLCTQVAFGYIVLKWEAG, AFALSVLPVIIFFSALIAVLY, LFGYALLGIPIEYLLAASFMA, LAFVALIAVVNGILGGAFGLF, GVTLESILGYVFSPIAFLIGV, ATIISFALCGFANFSSIAIML, and KAVLAGTLANLLSAAIAGMFI.

The protein belongs to the concentrative nucleoside transporter (CNT) (TC 2.A.41) family.

The protein resides in the cell membrane. This is an uncharacterized protein from Bacillus subtilis (strain 168).